The sequence spans 329 residues: Dapdiamide synthesis protein DdaC (329 aa).

The cofactor is Fe(2+).

It functions in the pathway antibiotic biosynthesis. Involved in dapdiamide antibiotics biosynthesis. Catalyzes the alpha-ketoglutarate-dependent epoxidation of the covalently bound N-beta-fumaramoyl-DAP-S-DdaD to generate N-beta-epoxysuccinamoyl-DAP in thioester linkage to DdaD. The sequence is that of Dapdiamide synthesis protein DdaC from Enterobacter agglomerans (Erwinia herbicola).